We begin with the raw amino-acid sequence, 201 residues long: MINKAILGGTFDPIHNAHINVAYEALERFNLEEVIFIPAGNPPHKIKLKKTPAHIRYEMVKLAIEKETRFSISDFEIKSKGLSYTYRTLKHFKEKEPETNWYFITGEDCLSYLEHWKYIDEIFNICNFVIFSREGFKEKEEIIKKKKSILLKYGKEILFMDASILDISSTKIRNRIKEGKEVSFYMPDKVYKFILQNNLYK.

This sequence belongs to the NadD family.

It carries out the reaction nicotinate beta-D-ribonucleotide + ATP + H(+) = deamido-NAD(+) + diphosphate. It functions in the pathway cofactor biosynthesis; NAD(+) biosynthesis; deamido-NAD(+) from nicotinate D-ribonucleotide: step 1/1. Catalyzes the reversible adenylation of nicotinate mononucleotide (NaMN) to nicotinic acid adenine dinucleotide (NaAD). This is Probable nicotinate-nucleotide adenylyltransferase from Clostridium botulinum (strain Kyoto / Type A2).